A 98-amino-acid chain; its full sequence is Co-chaperonin GroES (98 aa).

It belongs to the GroES chaperonin family. As to quaternary structure, heptamer of 7 subunits arranged in a ring. Interacts with the chaperonin GroEL.

The protein localises to the cytoplasm. Together with the chaperonin GroEL, plays an essential role in assisting protein folding. The GroEL-GroES system forms a nano-cage that allows encapsulation of the non-native substrate proteins and provides a physical environment optimized to promote and accelerate protein folding. GroES binds to the apical surface of the GroEL ring, thereby capping the opening of the GroEL channel. The chain is Co-chaperonin GroES from Agrobacterium fabrum (strain C58 / ATCC 33970) (Agrobacterium tumefaciens (strain C58)).